The following is a 173-amino-acid chain: Probable lipoprotein EnvE (173 aa).

An N-terminal signal peptide occupies residues 1–20; it reads MTLLSGKTTLVLCLSSILCG. The N-palmitoyl cysteine moiety is linked to residue Cys-21. The S-diacylglycerol cysteine moiety is linked to residue Cys-21.

It localises to the cell membrane. The polypeptide is Probable lipoprotein EnvE (envE) (Salmonella typhimurium (strain LT2 / SGSC1412 / ATCC 700720)).